Reading from the N-terminus, the 272-residue chain is Orotidine 5'-phosphate decarboxylase (272 aa).

The active-site Proton donor is the K95.

This sequence belongs to the OMP decarboxylase family. Type 2 subfamily.

It catalyses the reaction orotidine 5'-phosphate + H(+) = UMP + CO2. It functions in the pathway pyrimidine metabolism; UMP biosynthesis via de novo pathway; UMP from orotate: step 2/2. This Bordetella petrii (strain ATCC BAA-461 / DSM 12804 / CCUG 43448) protein is Orotidine 5'-phosphate decarboxylase.